Reading from the N-terminus, the 1342-residue chain is MSLSPHVENASIPKGSTPIPKNRNVSSIGKGEFLGSSSSNNSSFRMNHYSNSGQPSVLDSIRRPNLTPTFSYSNGVYMPESHRTSSFNDSYLPYDKNPYAKTTGSMSNKSNMKIKTKKNAINTNTRKSSGLIYTTKVDKELSSIDKVNDPNINGLVCAGKTHLGLYKFSPSDRSIKCVHDFITPNSNTSTRGTTSLLPKLSKRTRQNKFSTIADVKTGFNNYKNCIAVCNNSTAISIYDLNKSSSIDNPLITSLCEHTRSINSFDFNMVESNLIISGGQDSCVKIWDLRSNKSKSSNRSDISINTASDSIRDVKWMPGYNFASKNDQGSSTYGNLKSGYKFASIHDSGYLLKFDLRQPAQYEKKLNAHTGPGLCLNWHPNQEYIATGGRDGKCCLWFVGDNANAAENTVLNYGNSPSLHAPNTSLNNSGSLAFPKLTINTGYPVTKLKFKPAYSSNIYNSLLGISSMGDEAEVRIYSLARKYIPKHVLLSETPSLGLVWWDENLIFNIDKGTRINGWDINKEPTVLENLSKNTTTWRDLDGNGLLSVDQEIGSYEVVEPELQPTSSTTCKKHPGTIKNPKNGNPENQGIIGGIKKGFSHTGLTSFTPERPPTLKAGPTFSSKSLTLASGASSFNSSSASLTSLTPQTENREEIAIEPPCIITLDIPQIFNNIRLTKIAHSRKKNVISESSSMKNSPVEKFKYLARQLKFSYIREHNVSDSADTAYKNDIENIDVVKNATETHGDNTTTTNNNDDGDDDDDDDDDDDKIIESHLLKKYNFPENNTWATLMNEKVNNKKSKRNSSSSREFDEKDVRSSISSISASRQSHDRSRKIDKNVEAELQEKIQTLVDLISIATHNASVYLSIDDLTNFKIWILIRDSLLWDLKWMTSSQISSDNASNMDANESSDFEAGENLKTGKEFPEEDGAGTSGAESLVEERPQAFRANSDEPSDAEKKPVSKLKEQLKNTEIIPYAQPNEDSDEVLTKLKELQNQRLESRTKMGETVSDDVIIEEDEHEHQEEEQPHDSPTKSAQFHASPIAKSIPILQKREHRKSFIDTFMLHSPNGYNGDTDIGNEDDNISPRFTYNSVSPRSKVSSLQSYATTTSQLETFKKLSSHTAPIIGSPRHAPSRPDSIGREQLSSSLTKKLAKCKKIIADPPWDTKKLIKQLYNQATETGNVVLTVNILFLFQTIYQITEIDIAKDAIAHFLLLLHRYELFGIAADVLKYCPFEDIMGSEGDQSSIRLFCERCGELITNESSKEKLRAEAQQTGNKKIMDKFGYWYCDSCKKKNTSCVLCERPLKKLTMVILPCGHEGHFQCIQEWFLDENEQECPGGCPGVAFI.

The disordered stretch occupies residues 1 to 39 (MSLSPHVENASIPKGSTPIPKNRNVSSIGKGEFLGSSSS). WD repeat units follow at residues 207-248 (NKFS…SIDN), 256-296 (EHTR…SKSS), 305-342 (TASD…YKFA), 367-406 (AHTG…NAAE), 439-486 (NTGY…IPKH), and 489-527 (LSET…TVLE). Disordered stretches follow at residues 559–593 (PELQ…IGGI), 600–619 (TGLT…GPTF), 630–651 (ASSF…ENRE), 736–766 (KNAT…DDDD), and 788–831 (LMNE…DRSR). Positions 630 to 644 (ASSFNSSSASLTSLT) are enriched in low complexity. Acidic residues predominate over residues 753–766 (DDGDDDDDDDDDDD). Positions 815–824 (SSISSISASR) are enriched in low complexity. The stretch at 844–884 (KIQTLVDLISIATHNASVYLSIDDLTNFKIWILIRDSLLWD) is one WD 7 repeat. Disordered stretches follow at residues 942 to 963 (AFRA…KLKE) and 1014 to 1047 (DEHE…PILQ). Basic and acidic residues-rich tracts occupy residues 952 to 963 (DAEKKPVSKLKE) and 1016 to 1028 (HEHQ…HDSP). Ser-1037, Ser-1081, Ser-1088, Ser-1090, Ser-1124, and Ser-1134 each carry phosphoserine. WD repeat units follow at residues 1130-1170 (SRPD…KQLY) and 1217-1256 (LFGI…LITN). The segment at 1294 to 1336 (CVLCERPLKKLTMVILPCGHEGHFQCIQEWFLDENEQECPGGC) adopts an RING-type; degenerate zinc-finger fold.

It belongs to the WD repeat RTC1 family.

It localises to the vacuole. Its function is as follows. May be involved in a process influencing telomere capping. This Saccharomyces cerevisiae (strain JAY291) (Baker's yeast) protein is Restriction of telomere capping protein 1 (RTC1).